The sequence spans 339 residues: DNA repair protein RAD51 homolog 1 (339 aa).

The disordered stretch occupies residues 1 to 22 (MAMQMQLEASADTSVEEESFGP). The residue at position 2 (Ala-2) is an N-acetylalanine. Residue Thr-13 is modified to Phosphothreonine. Ser-14 bears the Phosphoserine mark. A HhH domain is found at 48–77 (TVEAVAYAPKKELINIKGISEAKADKILTE). Residue Tyr-54 is modified to Phosphotyrosine; by ABL1. Residues Lys-58 and Lys-64 each participate in a glycyl lysine isopeptide (Lys-Gly) (interchain with G-Cter in ubiquitin) cross-link. Residue 127-134 (GEFRTGKT) coordinates ATP. The interaction with PALB2 stretch occupies residues 184-257 (DVLDNVAYAR…FLRMLLRLAD (74 aa)). Residues 245–260 (LARFLRMLLRLADEFG) carry the Nuclear export signal; masked by the interaction with BRCA2 motif. Thr-309 carries the phosphothreonine; by CHEK1 modification.

This sequence belongs to the RecA family. RAD51 subfamily. In terms of assembly, forms linear homooligomers, giving rise to a RAD51 nucleoprotein filament, which is essential for strand-pairing reactions during DNA recombination. Interacts with BRCA1 and either directly or indirectly with p53. Interacts with XRCC3, RAD54L and RAD54B. Interacts with the BCDX2 subcomplex RAD51C:RAD51B. Component of the homologous recombination repair (HR) complex composed of ERCC5/XPG, BRCA2, PALB2, DSS1 and RAD51. Interacts directly with PALB2 which may serve as a scaffold for a HR complex containing PALB2, BRCA2, RAD51C, RAD51 and XRCC3. Interacts with RAD51AP1 and RAD51AP2. Interacts with CHEK1, and this may require prior phosphorylation of CHEK1. Interacts with the MND1-PSMC3IP heterodimer. Found in a complex, at least composed of BLM, RAD51 and SPIDR; the complex formation is mediated by SPIDR. Interacts with SPIDR; the interaction is direct and recruits RAD51 to DNA damage sites. Interacts with FIGNL1 (via N-terminal one-half region); the interaction is direct. Interacts with RAD51AP1 (via C-terminal region); the interaction is direct. Interacts with NABP2, RPA1, PALB2 and RAD51. Interacts with SWI5/C9orf119, and at lower level with SFR1/MEIR5. Interacts with hyperphosphorylated RPA2; this interaction is necessary for efficient recruitment to chromatin in response to DNA damage. Interacts with SWSAP1; involved in homologous recombination repair. Interacts with PARPBP, BRCA2 and RECQL5; these interactions interfere with the formation of the RAD51-DNA homologous recombination structure. Interacts with POLQ; POLQ acts as an inhibitor of homology-recombination repair (HR) pathway by limiting RAD51 accumulation at resected ends. Interacts with POLN. Interacts with FBH1. Interacts with RFWD3. Interacts with the MCM8-MCM9 complex; the interaction recruits RAD51 to DNA damage sites. Component of a multiprotein complex with MEIOB and SPATA22. Interacts with the complex BRME1:HSF2BP:BRCA2. Interacts with HELQ; stimulating HELQ DNA helicase activity and ability to unwing DNA. Interacts with MMS22L; the interaction is direct and promotes recruitment of RAD51 to sites of DNA damage. Interacts with the ATAD5 RFC-like complex. Within the ATAD5 RFC-like complex, interacts with ATAD5 (via N-terminus); the interaction is direct and enhanced under replication stress. Interacts with WDR48; the interaction is enhanced under replication stress. Interacts with DNA helicase ZGRF1; the interaction promotes RAD51 strand exchange activity. Interacts (when phosphorylated) with TOPBP1; interaction takes place following phosphorylation by CK2 and PLK1 and promotes recruitment to DNA damage sites. Interacts with GRB2; this interaction inhibits RAD51 ATPase activity to stabilize RAD51 on stalled replication forks. Ubiquitinated by the SCF(FBH1) E3 ubiquitin ligase complex, regulating RAD51 subcellular location and preventing its association with DNA. Ubiquitinated by RFWD3 in response to DNA damage: ubiquitination leads to degradation by the proteasome, promoting homologous recombination. In terms of processing, phosphorylation of Thr-309 by CHEK1 may enhance association with chromatin at sites of DNA damage and promote DNA repair by homologous recombination. Phosphorylated at Ser-14 by PLK1, triggering phosphorylation at Thr-13 by CK2, thereby promoting interaction with TOPBP1 and recruitment to DNA damage sites during S-phase. Phosphorylation by ABL1 inhibits function. As to expression, expressed in the testes (at protein level). Expressed in the brain (at protein level). Expressed in the thymus, spleen, ovary and small intestine.

It localises to the nucleus. Its subcellular location is the cytoplasm. It is found in the perinuclear region. The protein localises to the mitochondrion matrix. The protein resides in the chromosome. It localises to the cytoskeleton. Its subcellular location is the microtubule organizing center. It is found in the centrosome. Plays an important role in homologous strand exchange, a key step in DNA repair through homologous recombination (HR). Binds to single-stranded DNA in an ATP-dependent manner to form nucleoprotein filaments which are essential for the homology search and strand exchange. Catalyzes the recognition of homology and strand exchange between homologous DNA partners to form a joint molecule between a processed DNA break and the repair template. Recruited to resolve stalled replication forks during replication stress. Part of a PALB2-scaffolded HR complex containing BRCA2 and RAD51C and which is thought to play a role in DNA repair by HR. Plays a role in regulating mitochondrial DNA copy number under conditions of oxidative stress in the presence of RAD51C and XRCC3. Also involved in interstrand cross-link repair. The polypeptide is DNA repair protein RAD51 homolog 1 (Mus musculus (Mouse)).